A 207-amino-acid polypeptide reads, in one-letter code: Ribonuclease HII (207 aa).

Residues 18 to 207 (TYLSGSDEAG…PIKKISKETS (190 aa)) form the RNase H type-2 domain. Residues aspartate 24, glutamate 25, and aspartate 116 each coordinate a divalent metal cation.

Belongs to the RNase HII family. Mn(2+) is required as a cofactor. Mg(2+) serves as cofactor.

The protein localises to the cytoplasm. The catalysed reaction is Endonucleolytic cleavage to 5'-phosphomonoester.. Its function is as follows. Endonuclease that specifically degrades the RNA of RNA-DNA hybrids. The protein is Ribonuclease HII of Mycoplasma capricolum subsp. capricolum (strain California kid / ATCC 27343 / NCTC 10154).